The chain runs to 2547 residues: Lovastatin diketide synthase mokB (2547 aa).

In terms of domain architecture, Ketosynthase family 3 (KS3) spans 10–430 (PTPIAVVGMG…GANAHAIVER (421 aa)). Catalysis depends on for beta-ketoacyl synthase activity residues Cys183, His318, and His353. Residues 545–890 (VFTGQGAQWF…MDLLQGGYPV (346 aa)) form an acyl and malonyl transferase region. The active-site For malonyltransferase activity is the Ser635. Residues 941 to 1079 (HDLIGVQEPL…GLIRAQVDHP (139 aa)) are N-terminal hotdog fold. One can recognise a PKS/mFAS DH domain in the interval 941–1252 (HDLIGVQEPL…FQSLGAVISD (312 aa)). The active-site Proton acceptor; for dehydratase activity is the His973. A dehydratase-like region spans residues 973–985 (HVVGSRILFPGAG). Positions 1095–1252 (SRKMAPQDLW…FQSLGAVISD (158 aa)) are C-terminal hotdog fold. Residue Asp1160 is the Proton donor; for dehydratase activity of the active site. Cys1340 and Cys1379 are oxidised to a cystine. The segment at 1510 to 1547 (YDVVLACQVLHATSNMQRTLNNVRKLLKPGGKLILVET) is methyltransferase. Residues 2459–2541 (ASTEEEATAL…EVAEVVVKKY (83 aa)) form the Carrier domain. An O-(pantetheine 4'-phosphoryl)serine modification is found at Ser2501.

The cofactor is pantetheine 4'-phosphate.

It catalyses the reaction holo-[2-methylbutanoate polyketide synthase] + 2 malonyl-CoA + S-adenosyl-L-methionine + 2 NADPH + 3 H(+) = (S)-2-methylbutanoyl-[2-methylbutanoate polyketide synthase] + S-adenosyl-L-homocysteine + 2 CO2 + 2 NADP(+) + 2 CoA + H2O. It functions in the pathway polyketide biosynthesis; lovastatin biosynthesis. Functionally, diketide synthase; part of the gene cluster that mediates the biosynthesis of monakolin K, also known as lovastatin, and which acts as a potent competitive inhibitor of HMG-CoA reductase. Monakolin K biosynthesis is performed in two stages. The first stage is catalyzed by the nonaketide synthase mokA, which belongs to type I polyketide synthases and catalyzes the iterative nine-step formation of the polyketide. This PKS stage completed by the action of dehydrogenase mokE, which catalyzes the NADPH-dependent reduction of the unsaturated tetra-, penta- and heptaketide intermediates that arise during the mokA-mediated biosynthesis of the nonaketide chain and leads to dihydromonacolin L. Covalently bound dihydromonacolin L is released from mokA by the mokD esterase. Conversion of dihydromonacolin L into monacolin L and then monacolin J is subsequently performed with the participation of molecular oxygen and P450 monoogygenase mokC. Finally, mokF performs the conversion of monacoline J to monacoline K through the addition of the side-chain diketide moiety (2R)-2-methylbutanoate produced by the diketide synthase mokB. The polypeptide is Lovastatin diketide synthase mokB (Monascus pilosus (Red mold)).